The primary structure comprises 142 residues: Large ribosomal subunit protein uL13 (142 aa).

It belongs to the universal ribosomal protein uL13 family. Part of the 50S ribosomal subunit.

In terms of biological role, this protein is one of the early assembly proteins of the 50S ribosomal subunit, although it is not seen to bind rRNA by itself. It is important during the early stages of 50S assembly. This chain is Large ribosomal subunit protein uL13, found in Thermococcus kodakarensis (strain ATCC BAA-918 / JCM 12380 / KOD1) (Pyrococcus kodakaraensis (strain KOD1)).